Here is a 156-residue protein sequence, read N- to C-terminus: Transcriptional repressor NrdR (156 aa).

A zinc finger lies at 3 to 34; it reads CPYCRHPDSRVVDSREAEEGAAIRRRRSCPNC. In terms of domain architecture, ATP-cone spans 46–136; that stretch reads LSVVKRSGVT…VYRSFTSAED (91 aa).

Belongs to the NrdR family. Zn(2+) serves as cofactor.

Its function is as follows. Negatively regulates transcription of bacterial ribonucleotide reductase nrd genes and operons by binding to NrdR-boxes. In Nocardia farcinica (strain IFM 10152), this protein is Transcriptional repressor NrdR.